The primary structure comprises 355 residues: Green-sensitive opsin-1 (355 aa).

Topologically, residues 1-49 are extracellular; that stretch reads MAAHADEPVFAARRYNEETTRESAFVYTNANNTRDPFEGPNYHIAPRWV. Asn31 carries N-linked (GlcNAc...) asparagine glycosylation. The chain crosses the membrane as a helical span at residues 50-74; sequence YNLASLWMIIVVIASIFTNSLVIVA. At 75–86 the chain is on the cytoplasmic side; the sequence is TAKFKKLRHPLN. A helical membrane pass occupies residues 87-112; that stretch reads WILVNLAIADLGETVLASTISVFNQV. Residues 113–126 are Extracellular-facing; that stretch reads FGYFVLGHPMCIFE. Cys123 and Cys200 are disulfide-bonded. The chain crosses the membrane as a helical span at residues 127–146; sequence GWTVSVCGITALWSLTIISW. Residues 147 to 165 lie on the Cytoplasmic side of the membrane; the sequence is ERWVVVCKPFGNVKFDGKW. Residues 166–189 form a helical membrane-spanning segment; that stretch reads AAGGIIFAWTWAIIWCTPPIFGWS. Over 190 to 215 the chain is Extracellular; sequence RYWPHGLKTSCGPDVFSGSEDPGVAS. Residues 216-243 traverse the membrane as a helical segment; the sequence is YMVTLLLTCCILPLSVIIICYIFVWNAI. Residues 244–265 are Cytoplasmic-facing; it reads HQVAQQQKDSESTQKAEKEVSR. The helical transmembrane segment at 266–289 threads the bilayer; sequence MVVVMILAFILCWGPYASFATFSA. At 290–297 the chain is on the extracellular side; the sequence is LNPGYAWH. A helical membrane pass occupies residues 298-322; that stretch reads PLAAALPAYFAKSATIYNPIIYVFM. Lys309 is modified (N6-(retinylidene)lysine). At 323–355 the chain is on the cytoplasmic side; sequence NRQFRSCIMQLFGKKVEDASEVSGSTTEVSTAS.

Belongs to the G-protein coupled receptor 1 family. Opsin subfamily. The color pigments are found in the cone photoreceptor cells.

It localises to the membrane. In terms of biological role, visual pigments are the light-absorbing molecules that mediate vision. They consist of an apoprotein, opsin, covalently linked to cis-retinal. This chain is Green-sensitive opsin-1 (G103), found in Psalidodon fasciatus (Banded astyanax).